A 214-amino-acid polypeptide reads, in one-letter code: tRNA (guanine-N(7)-)-methyltransferase (214 aa).

4 residues coordinate S-adenosyl-L-methionine: glutamate 43, glutamate 68, aspartate 95, and aspartate 117. The active site involves aspartate 117. Substrate is bound by residues lysine 121, aspartate 153, and 191-194 (TEYE).

Belongs to the class I-like SAM-binding methyltransferase superfamily. TrmB family.

It catalyses the reaction guanosine(46) in tRNA + S-adenosyl-L-methionine = N(7)-methylguanosine(46) in tRNA + S-adenosyl-L-homocysteine. Its pathway is tRNA modification; N(7)-methylguanine-tRNA biosynthesis. Functionally, catalyzes the formation of N(7)-methylguanine at position 46 (m7G46) in tRNA. In Lachnoclostridium phytofermentans (strain ATCC 700394 / DSM 18823 / ISDg) (Clostridium phytofermentans), this protein is tRNA (guanine-N(7)-)-methyltransferase.